A 217-amino-acid chain; its full sequence is Methylthioribulose-1-phosphate dehydratase (217 aa).

Zn(2+)-binding residues include histidine 106 and histidine 108.

This sequence belongs to the aldolase class II family. MtnB subfamily. Requires Zn(2+) as cofactor.

The enzyme catalyses 5-(methylsulfanyl)-D-ribulose 1-phosphate = 5-methylsulfanyl-2,3-dioxopentyl phosphate + H2O. It participates in amino-acid biosynthesis; L-methionine biosynthesis via salvage pathway; L-methionine from S-methyl-5-thio-alpha-D-ribose 1-phosphate: step 2/6. Its function is as follows. Catalyzes the dehydration of methylthioribulose-1-phosphate (MTRu-1-P) into 2,3-diketo-5-methylthiopentyl-1-phosphate (DK-MTP-1-P). This chain is Methylthioribulose-1-phosphate dehydratase, found in Xanthomonas euvesicatoria pv. vesicatoria (strain 85-10) (Xanthomonas campestris pv. vesicatoria).